The chain runs to 262 residues: Cutinase 1 (262 aa).

Residue Tyr-61 participates in poly(ethylene terephthalate) binding. Residue Ser-131 is the Nucleophile of the active site. The poly(ethylene terephthalate) site is built by Met-132 and Trp-156. Catalysis depends on charge relay system residues Asp-177 and His-209. Cys-242 and Cys-260 form a disulfide bridge.

The protein belongs to the AB hydrolase superfamily.

Its subcellular location is the secreted. It localises to the periplasm. The enzyme catalyses (ethylene terephthalate)(n) + H2O = (ethylene terephthalate)(n-1) + 4-[(2-hydroxyethoxy)carbonyl]benzoate + H(+). It catalyses the reaction a butanoate ester + H2O = an aliphatic alcohol + butanoate + H(+). The catalysed reaction is an acetyl ester + H2O = an aliphatic alcohol + acetate + H(+). It carries out the reaction cutin + H2O = cutin monomers.. Catalyzes the hydrolysis of cutin, a polyester that forms the structure of plant cuticle. Shows esterase activity towards p-nitrophenol-linked aliphatic esters (pNP-aliphatic esters). Capable of degrading the plastic poly(ethylene terephthalate) (PET), the most abundant polyester plastic in the world. Capable of degrading the bioplastic poly(lactic acid) (PLLA). This is Cutinase 1 from Thermobifida cellulosilytica.